The primary structure comprises 225 residues: tRNA (guanine-N(1)-)-methyltransferase (225 aa).

Residues G110 and 130 to 135 (VGDYVL) contribute to the S-adenosyl-L-methionine site.

Belongs to the RNA methyltransferase TrmD family. As to quaternary structure, homodimer.

The protein localises to the cytoplasm. The catalysed reaction is guanosine(37) in tRNA + S-adenosyl-L-methionine = N(1)-methylguanosine(37) in tRNA + S-adenosyl-L-homocysteine + H(+). In terms of biological role, specifically methylates guanosine-37 in various tRNAs. This Neorickettsia sennetsu (strain ATCC VR-367 / Miyayama) (Ehrlichia sennetsu) protein is tRNA (guanine-N(1)-)-methyltransferase.